An 84-amino-acid chain; its full sequence is Large ribosomal subunit protein bL27 (84 aa).

Residues 1-21 form a disordered region; it reads MAHKKGASSTRNGRDSNAQRL. The span at 7 to 19 shows a compositional bias: polar residues; that stretch reads ASSTRNGRDSNAQ.

This sequence belongs to the bacterial ribosomal protein bL27 family.

This Clavibacter michiganensis subsp. michiganensis (strain NCPPB 382) protein is Large ribosomal subunit protein bL27.